The sequence spans 212 residues: Ras-related protein Rab-15 (212 aa).

Positions 17, 18, 19, 20, 21, 22, 23, 35, 39, and 40 each coordinate GTP. Thr22 contacts Mg(2+). 2 short sequence motifs (switch) span residues 31-45 and 63-80; these read NEFH…GVDF and DTAG…YYRR. Residues Thr40 and Asp63 each coordinate Mg(2+). The GTP site is built by Gly66, Asn121, Lys122, Asp124, Ser151, and Ala152. Residues 192-212 form a disordered region; the sequence is ELEEDEGKPEGPANSSKTCWC. Residues Cys210 and Cys212 are each lipidated (S-geranylgeranyl cysteine). Residue Cys212 is modified to Cysteine methyl ester.

This sequence belongs to the small GTPase superfamily. Rab family. As to quaternary structure, the GTP bound form of RAB15 interacts with REP15. Interacts (GTP-bound form) with MICAL1, MICAL3, MICALCL, EHBP1 and EHBP1L1. Mg(2+) serves as cofactor.

The protein resides in the cell membrane. The catalysed reaction is GTP + H2O = GDP + phosphate + H(+). Regulated by guanine nucleotide exchange factors (GEFs) which promote the exchange of bound GDP for free GTP. Regulated by GTPase activating proteins (GAPs) which increase the GTP hydrolysis activity. Inhibited by GDP dissociation inhibitors (GDIs). The small GTPases Rab are key regulators of intracellular membrane trafficking, from the formation of transport vesicles to their fusion with membranes. Rabs cycle between an inactive GDP-bound form and an active GTP-bound form that is able to recruit to membranes different sets of downstream effectors directly responsible for vesicle formation, movement, tethering and fusion. RAB15 may act in concert with RAB3A in regulating aspects of synaptic vesicle membrane flow within the nerve terminal. In Mus musculus (Mouse), this protein is Ras-related protein Rab-15.